The sequence spans 301 residues: MSFVKYLRRDNLLQLAGKPSLSRNYILQTCRTLIIETSPPEFVKLNRLSGSDSGIIEVNLDRPVTKNAINKEMLKSLQNAFESIHQDNSARVVMIRSLVPGVFCAGADLKERRTMSPSEVHTYVNSLRYMFSFIEALSIPTIAAIEGAALGGGLEMALACDLRICGENAVFGLPETGLAIIPGAGGTQRLSRLVGRSVSKELIFTGRKIDAIEAANKGLVNICVTAGEAHEKAIEMAQQINEKGPLAIKMAKKAIDEGIETNMASGLEVEEMCYQKLLNTQDRLEGLAAFAEKRKPLYTGN.

The transit peptide at 1–32 (MSFVKYLRRDNLLQLAGKPSLSRNYILQTCRT) directs the protein to the mitochondrion. Substrate contacts are provided by residues 105-109 (AGADL) and glycine 152.

Belongs to the enoyl-CoA hydratase/isomerase family.

It localises to the mitochondrion. It carries out the reaction a (3S)-3-hydroxyacyl-CoA = a (2E)-enoyl-CoA + H2O. It catalyses the reaction a 4-saturated-(3S)-3-hydroxyacyl-CoA = a (3E)-enoyl-CoA + H2O. Its pathway is lipid metabolism; fatty acid beta-oxidation. Functionally, straight-chain enoyl-CoA thioesters from C4 up to at least C16 are processed, although with decreasing catalytic rate. The chain is Probable enoyl-CoA hydratase 2, mitochondrial from Arabidopsis thaliana (Mouse-ear cress).